The sequence spans 994 residues: cGMP-dependent protein kinase (994 aa).

Residues 1–162 (MGACISKNSS…QDDSHTEEEK (162 aa)) are disordered. Residue G2 is the site of N-myristoyl glycine attachment. The S-palmitoyl cysteine moiety is linked to residue C4. Low complexity-rich tracts occupy residues 9–22 (SSARVSRSSALSAS) and 33–46 (GAAGDETSATGAAE). Composition is skewed to basic and acidic residues over residues 65-80 (ELERAPDGVCPDREEP) and 133-162 (EGPKEKPGGDRKPAQKAILKQDDSHTEEEK). 4 cNMP-binding domain regions span residues 189-305 (VCSS…FLAS), 308-407 (FFEM…RVLG), 463-539 (GIRF…ATLG), and 561-660 (IFRY…NEII). Residues G253, E254, A256, R263, and S264 each contribute to the 3',5'-cyclic GMP site. 6 residues coordinate 3',5'-cyclic GMP: R616, G625, E626, A628, R635, and T636. The 258-residue stretch at 684-941 (LQVVRVVGRG…YKDIKEHAFF (258 aa)) folds into the Protein kinase domain. Residues 690–698 (VGRGTFGTV) and K713 each bind ATP. The active-site Proton acceptor is D807. The AGC-kinase C-terminal domain occupies 942–994 (GDFDWDKLAGRGLPPPLAPKGETYAEDTEQSSFELDEDDTIVLEDEYDWDKDF). Residues 954–976 (LPPPLAPKGETYAEDTEQSSFEL) form a disordered region. A compositionally biased stretch (acidic residues) spans 965–976 (YAEDTEQSSFEL).

This sequence belongs to the protein kinase superfamily. AGC Ser/Thr protein kinase family. cGMP subfamily. Requires Mg(2+) as cofactor.

Its subcellular location is the cytoplasm. The protein localises to the membrane. It is found in the cell membrane. It catalyses the reaction L-seryl-[protein] + ATP = O-phospho-L-seryl-[protein] + ADP + H(+). It carries out the reaction L-threonyl-[protein] + ATP = O-phospho-L-threonyl-[protein] + ADP + H(+). Activated by cGMP. The cGMP-binding domains acts cooperatively to activate PKG. Inhibited by the antiparasitic small molecule 4-[2-(4-fluorophenyl)-5-(1-methylpiperidine-4-yl)-1Hpyrrol- 3-yl]pyridine (compound 1). Functionally, serine/threonine protein kinase which acts as a downstream effector of the second messenger cGMP. Plays an essential role in tachyzoite invasion of and egress from host cells. During invasion of host cells, regulates the apico-basal flux of F-actin probably via Ca(2+)-mediated activation of CDPK1. In tachyzoites, required for microneme secretion. Required for tachyzoite gliding motility. Its function is as follows. Plays an essential role in parasite invasion of and egress from host cells, and microneme secretion. In terms of biological role, dispensable for parasite invasion of and egress from host cells, and microneme secretion. This is cGMP-dependent protein kinase from Toxoplasma gondii.